The chain runs to 428 residues: Spliceosome RNA helicase DDX39B (428 aa).

Residues 1–19 (MAENDVDNELLDYEDDEVE) show a composition bias toward acidic residues. The interval 1 to 31 (MAENDVDNELLDYEDDEVETAAGGDGAEAPA) is disordered. An N-acetylalanine modification is found at A2. N6-acetyllysine; alternate is present on K36. K36 is covalently cross-linked (Glycyl lysine isopeptide (Lys-Gly) (interchain with G-Cter in SUMO2); alternate). Residues S38 and S41 each carry the phosphoserine modification. Positions 45-73 (SGFRDFLLKPELLRAIVDCGFEHPSEVQH) match the Q motif motif. The region spanning 76–249 (IPQAILGMDV…RKFMQDPMEI (174 aa)) is the Helicase ATP-binding domain. 89–96 (AKSGMGKT) contacts ATP. At T172 the chain carries Phosphothreonine. Residues 196 to 199 (DECD) carry the DECD box motif. The region spanning 261–422 (GLQQYYVKLK…ELPDEIDISS (162 aa)) is the Helicase C-terminal domain.

The protein belongs to the DEAD box helicase family. DECD subfamily. As to quaternary structure, homodimer, and heterodimer with DDX39A. DDX39B interacts with the THO subcomplex to form the THO-DDX39B complex which multimerizes into a 28-subunit tetrameric assembly. Component of the transcription/export (TREX) complex at least composed of ALYREF/THOC4, DDX39B, SARNP/CIP29, CHTOP and the THO subcomplex; in the complex interacts with THOC2. THOC1-THOC2-THOC3-DDX39B subcomplex is sufficient for the interaction with export factor NXF1-NXT1. TREX seems to have a dynamic structure involving ATP-dependent remodeling. Within the TREX complex bridges ALYREF/THOC4 and the THO subcomplex, and, in a ATP-dependent manner, ALYREF/THOC4 and SARNP/CIP29. Component of the spliceosome. Interacts directly with U2AF2. Interacts with RBM8A, RNPS1 and SRRM1, FYTTD1/UIF, THOC1, MX1 and POLDIP3. Interacts with LUZP4. Interacts with SARNP/CIP29 (via the C-terminal domain); the interaction is direct and facilitates RNA binding of DDX39B.

The protein resides in the nucleus. It localises to the nucleus speckle. Its subcellular location is the cytoplasm. The enzyme catalyses ATP + H2O = ADP + phosphate + H(+). Its function is as follows. Involved in nuclear export of spliced and unspliced mRNA. Component of the TREX complex which is thought to couple mRNA transcription, processing and nuclear export, and specifically associates with spliced mRNA and not with unspliced pre-mRNA. The TREX complex is recruited to spliced mRNAs by a transcription-independent mechanism, binds to mRNA upstream of the exon-junction complex (EJC) and is recruited in a splicing- and cap-dependent manner to a region near the 5' end of the mRNA where it functions in mRNA export to the cytoplasm via the TAP/NXF1 pathway. The THOC1-THOC2-THOC3 core complex alone is sufficient to promote ATPase activity of DDX39B; in the complex THOC2 is the only component that directly interacts with DDX39B. Associates with SARNP/CIP29, which facilitates RNA binding of DDX39B and likely plays a role in mRNA export. May undergo several rounds of ATP hydrolysis during assembly of TREX to drive subsequent loading of components such as ALYREF/THOC4 and CHTOP onto mRNA. Also associates with pre-mRNA independent of ALYREF/THOC4. Involved in the nuclear export of intronless mRNA; the ATP-bound form is proposed to recruit export adapter ALYREF/THOC4 to intronless mRNA; its ATPase activity is cooperatively stimulated by RNA and ALYREF/THOC4 and ATP hydrolysis is thought to trigger the dissociation from RNA to allow the association of ALYREF/THOC4 and the NXF1-NXT1 heterodimer. Involved in transcription elongation and genome stability. Splice factor that is required for the first ATP-dependent step in spliceosome assembly and for the interaction of U2 snRNP with the branchpoint. Has both RNA-stimulated ATP binding/hydrolysis activity and ATP-dependent RNA unwinding activity. Even with the stimulation of RNA, the ATPase activity is weak. Can only hydrolyze ATP but not other NTPs. The RNA stimulation of ATPase activity does not have a strong preference for the sequence and length of the RNA. However, ssRNA stimulates the ATPase activity much more strongly than dsRNA. Can unwind 5' or 3' overhangs or blunt end RNA duplexes in vitro. The ATPase and helicase activities are not influenced by U2AF2; the effect of ALYREF/THOC4 is reported conflictingly. The polypeptide is Spliceosome RNA helicase DDX39B (DDX39B) (Bos taurus (Bovine)).